A 142-amino-acid chain; its full sequence is Mini-ribonuclease 3 (142 aa).

Aspartate 33 is a catalytic residue.

The protein belongs to the MrnC RNase family. As to quaternary structure, homodimer. Mg(2+) serves as cofactor.

It localises to the cytoplasm. Involved in correct processing of both the 5' and 3' ends of 23S rRNA precursor. Processes 30S rRNA precursor transcript even in absence of ribonuclease 3 (Rnc); Rnc processes 30S rRNA into smaller rRNA precursors. The chain is Mini-ribonuclease 3 from Thermoanaerobacter sp. (strain X514).